Here is a 312-residue protein sequence, read N- to C-terminus: tRNA uridine(34) hydroxylase (312 aa).

The 95-residue stretch at 124–218 (SDPEVLLIDT…YLEEVPEQES (95 aa)) folds into the Rhodanese domain. Catalysis depends on cysteine 178, which acts as the Cysteine persulfide intermediate. The tract at residues 293–312 (AKARNQPHPIGRNYRLPSEA) is disordered.

Belongs to the TrhO family.

The enzyme catalyses uridine(34) in tRNA + AH2 + O2 = 5-hydroxyuridine(34) in tRNA + A + H2O. Catalyzes oxygen-dependent 5-hydroxyuridine (ho5U) modification at position 34 in tRNAs. This chain is tRNA uridine(34) hydroxylase, found in Pseudomonas syringae pv. syringae (strain B728a).